The sequence spans 111 residues: NADH-ubiquinone oxidoreductase chain 4 (111 aa).

The helical transmembrane segment at 35-55 threads the bilayer; the sequence is LITSLFSWLDITVFLTGLSAF.

Belongs to the complex I subunit 4 family.

It localises to the mitochondrion membrane. The catalysed reaction is a ubiquinone + NADH + 5 H(+)(in) = a ubiquinol + NAD(+) + 4 H(+)(out). Functionally, core subunit of the mitochondrial membrane respiratory chain NADH dehydrogenase (Complex I) that is believed to belong to the minimal assembly required for catalysis. Complex I functions in the transfer of electrons from NADH to the respiratory chain. The immediate electron acceptor for the enzyme is believed to be ubiquinone. This is NADH-ubiquinone oxidoreductase chain 4 (MT-ND4) from Caiman crocodilus (Spectacled caiman).